The following is a 100-amino-acid chain: Conantokin-G (100 aa).

The signal sequence occupies residues 1-21 (MHLYTYLYLLVPLVTFHLILG). The propeptide occupies 22–80 (TGTLDDGGALTERRSADATALKAEPVLLQKSAARSTDDNGKDRLTQMKRILKQRGNKAR). The segment at 52 to 100 (SAARSTDDNGKDRLTQMKRILKQRGNKARGEEELQENQELIREKSNGKR) is disordered. A compositionally biased stretch (basic and acidic residues) spans 56 to 66 (STDDNGKDRLT). The gamma-carboxylation recognition sequence that plays a role in the conversion of Glu to carboxy-Glu (Gla) stretch occupies residues 61–80 (GKDRLTQMKRILKQRGNKAR). E83 is a binding site for a divalent metal cation. 5 positions are modified to 4-carboxyglutamate: E83, E84, E87, E90, and E94. A divalent metal cation is bound by residues E87, E90, and E94. A compositionally biased stretch (basic and acidic residues) spans 90 to 100 (ELIREKSNGKR). N97 is modified (asparagine amide).

The protein belongs to the conotoxin B superfamily. Requires Ca(2+) as cofactor. Mg(2+) serves as cofactor. In terms of tissue distribution, expressed by the venom duct.

It is found in the secreted. Functionally, conantokins inhibit N-methyl-D-aspartate (NMDA) receptors. This toxin is selective for the NR2B/GRIN2B subunit. Induces sleep-like symptoms in young mice and hyperactivity in older mice. The protein is Conantokin-G of Conus geographus (Geography cone).